The primary structure comprises 128 residues: Probable soluble cytochrome b562 2 (128 aa).

A signal peptide spans 1–22 (MGKTLMALITAALLSTSSLVMA). Positions 29 and 124 each coordinate heme b.

The protein belongs to the cytochrome b562 family. The cofactor is heme b.

The protein localises to the periplasm. In terms of biological role, electron-transport protein of unknown function. The sequence is that of Probable soluble cytochrome b562 2 (cybC2) from Yersinia pestis.